A 1097-amino-acid chain; its full sequence is RecBCD enzyme subunit RecC (1097 aa).

This sequence belongs to the RecC family. In terms of assembly, heterotrimer of RecB, RecC and RecD. All subunits contribute to DNA-binding.

Functionally, a helicase/nuclease that prepares dsDNA breaks (DSB) for recombinational DNA repair. Binds to DSBs and unwinds DNA via a highly rapid and processive ATP-dependent bidirectional helicase activity. Holoenzyme degrades any linearized DNA that is unable to undergo homologous recombination. In the holoenzyme this subunit recognizes the wild-type Chi sequence, and when added to isolated RecB increases its ATP-dependent helicase processivity. Unlike the case in E.coli, suppresses RecA-dependent homologous recombination, is instead required for single-strand annealing pathway repair of DSB. The sequence is that of RecBCD enzyme subunit RecC from Mycobacterium tuberculosis (strain ATCC 25618 / H37Rv).